A 420-amino-acid polypeptide reads, in one-letter code: Serine hydroxymethyltransferase (420 aa).

(6S)-5,6,7,8-tetrahydrofolate is bound by residues leucine 121 and 125–127 (GHL). Lysine 229 bears the N6-(pyridoxal phosphate)lysine mark.

It belongs to the SHMT family. Homodimer. Requires pyridoxal 5'-phosphate as cofactor.

The protein resides in the cytoplasm. It carries out the reaction (6R)-5,10-methylene-5,6,7,8-tetrahydrofolate + glycine + H2O = (6S)-5,6,7,8-tetrahydrofolate + L-serine. It participates in one-carbon metabolism; tetrahydrofolate interconversion. The protein operates within amino-acid biosynthesis; glycine biosynthesis; glycine from L-serine: step 1/1. In terms of biological role, catalyzes the reversible interconversion of serine and glycine with tetrahydrofolate (THF) serving as the one-carbon carrier. This reaction serves as the major source of one-carbon groups required for the biosynthesis of purines, thymidylate, methionine, and other important biomolecules. Also exhibits THF-independent aldolase activity toward beta-hydroxyamino acids, producing glycine and aldehydes, via a retro-aldol mechanism. This chain is Serine hydroxymethyltransferase, found in Streptomyces coelicolor (strain ATCC BAA-471 / A3(2) / M145).